The sequence spans 187 residues: RNA pyrophosphohydrolase (187 aa).

Residues 6 to 149 (GYRANVGIIL…KRQVYRQALT (144 aa)) form the Nudix hydrolase domain. The Nudix box motif lies at 38 to 59 (GGIKSGETPTEAMYRELAEETG). A disordered region spans residues 166–187 (AYREPLEPVEKNRKKSSDTRQS).

Belongs to the Nudix hydrolase family. RppH subfamily. A divalent metal cation is required as a cofactor.

In terms of biological role, accelerates the degradation of transcripts by removing pyrophosphate from the 5'-end of triphosphorylated RNA, leading to a more labile monophosphorylated state that can stimulate subsequent ribonuclease cleavage. This is RNA pyrophosphohydrolase from Nitrosomonas europaea (strain ATCC 19718 / CIP 103999 / KCTC 2705 / NBRC 14298).